The chain runs to 78 residues: Sec-independent protein translocase protein TatA (78 aa).

Residues 1–21 form a helical membrane-spanning segment; the sequence is MGGISIWQLLIIAVIVVLLFG. Positions 47-59 are enriched in basic and acidic residues; it reads ESEKKDADFEPKS. Positions 47-78 are disordered; that stretch reads ESEKKDADFEPKSLEQQSKQAATESKKDKEQA. Over residues 60–69 the composition is skewed to polar residues; it reads LEQQSKQAAT.

It belongs to the TatA/E family. In terms of assembly, the Tat system comprises two distinct complexes: a TatABC complex, containing multiple copies of TatA, TatB and TatC subunits, and a separate TatA complex, containing only TatA subunits. Substrates initially bind to the TatABC complex, which probably triggers association of the separate TatA complex to form the active translocon.

It localises to the cell inner membrane. Its function is as follows. Part of the twin-arginine translocation (Tat) system that transports large folded proteins containing a characteristic twin-arginine motif in their signal peptide across membranes. TatA could form the protein-conducting channel of the Tat system. The polypeptide is Sec-independent protein translocase protein TatA (Vibrio vulnificus (strain CMCP6)).